Consider the following 253-residue polypeptide: Spermatogenesis-associated protein 9 (253 aa).

A helical transmembrane segment spans residues 144-166 (LTSIMCASYAALIYLTVCVNAVL). Basic and acidic residues predominate over residues 210 to 228 (AKPYRSLPEKPDSISDRPK). Residues 210–231 (AKPYRSLPEKPDSISDRPKLPA) form a disordered region.

It localises to the membrane. Functionally, may play at role in testicular development/spermatogenesis and may be an important factor in male infertility. The sequence is that of Spermatogenesis-associated protein 9 (SPATA9) from Bos taurus (Bovine).